A 146-amino-acid chain; its full sequence is Catabolic 3-dehydroquinase (146 aa).

Tyr-24 functions as the Proton acceptor in the catalytic mechanism. Asn-78, His-84, and Asp-91 together coordinate substrate. The active-site Proton donor is the His-104. Residues 105–106 (IT) and Arg-115 contribute to the substrate site.

Belongs to the type-II 3-dehydroquinase family. As to quaternary structure, homododecamer. Adopts a ring-like structure, composed of an arrangement of two hexameric rings stacked on top of one another.

The enzyme catalyses 3-dehydroquinate = 3-dehydroshikimate + H2O. The protein operates within aromatic compound metabolism; 3,4-dihydroxybenzoate biosynthesis; 3,4-dihydroxybenzoate from 3-dehydroquinate: step 1/2. Its function is as follows. Is involved in the catabolism of quinate. Allows the utilization of quinate as carbon source via the beta-ketoadipate pathway. This is Catabolic 3-dehydroquinase from Candida tropicalis (strain ATCC MYA-3404 / T1) (Yeast).